Here is a 259-residue protein sequence, read N- to C-terminus: Thiazole synthase (259 aa).

The Schiff-base intermediate with DXP role is filled by Lys95. 1-deoxy-D-xylulose 5-phosphate is bound by residues Gly156, 182 to 183 (AG), and 204 to 205 (NT).

This sequence belongs to the ThiG family. As to quaternary structure, homotetramer. Forms heterodimers with either ThiH or ThiS.

It is found in the cytoplasm. The enzyme catalyses [ThiS sulfur-carrier protein]-C-terminal-Gly-aminoethanethioate + 2-iminoacetate + 1-deoxy-D-xylulose 5-phosphate = [ThiS sulfur-carrier protein]-C-terminal Gly-Gly + 2-[(2R,5Z)-2-carboxy-4-methylthiazol-5(2H)-ylidene]ethyl phosphate + 2 H2O + H(+). It participates in cofactor biosynthesis; thiamine diphosphate biosynthesis. In terms of biological role, catalyzes the rearrangement of 1-deoxy-D-xylulose 5-phosphate (DXP) to produce the thiazole phosphate moiety of thiamine. Sulfur is provided by the thiocarboxylate moiety of the carrier protein ThiS. In vitro, sulfur can be provided by H(2)S. The polypeptide is Thiazole synthase (Serratia proteamaculans (strain 568)).